The chain runs to 66 residues: Large ribosomal subunit protein eL24 (66 aa).

Residues C6, C9, C32, and C36 each coordinate Zn(2+). The C4-type zinc-finger motif lies at 6–36 (CSFCGKTIEPGTGIMYVRKDGAILYFCSNKC).

Belongs to the eukaryotic ribosomal protein eL24 family. Part of the 50S ribosomal subunit. Forms a cluster with proteins L3 and L14. Requires Zn(2+) as cofactor.

Its function is as follows. Binds to the 23S rRNA. This is Large ribosomal subunit protein eL24 from Thermoplasma volcanium (strain ATCC 51530 / DSM 4299 / JCM 9571 / NBRC 15438 / GSS1).